A 264-amino-acid polypeptide reads, in one-letter code: Thymidylate synthase (264 aa).

Arg-21 provides a ligand contact to dUMP. His-51 lines the (6R)-5,10-methylene-5,6,7,8-tetrahydrofolate pocket. 126-127 serves as a coordination point for dUMP; that stretch reads RR. The Nucleophile role is filled by Cys-146. DUMP-binding positions include 166–169, Asn-177, and 207–209; these read RSCD and HLY. Asp-169 contributes to the (6R)-5,10-methylene-5,6,7,8-tetrahydrofolate binding site. Ala-263 provides a ligand contact to (6R)-5,10-methylene-5,6,7,8-tetrahydrofolate.

It belongs to the thymidylate synthase family. Bacterial-type ThyA subfamily. In terms of assembly, homodimer.

It localises to the cytoplasm. The catalysed reaction is dUMP + (6R)-5,10-methylene-5,6,7,8-tetrahydrofolate = 7,8-dihydrofolate + dTMP. Its pathway is pyrimidine metabolism; dTTP biosynthesis. In terms of biological role, catalyzes the reductive methylation of 2'-deoxyuridine-5'-monophosphate (dUMP) to 2'-deoxythymidine-5'-monophosphate (dTMP) while utilizing 5,10-methylenetetrahydrofolate (mTHF) as the methyl donor and reductant in the reaction, yielding dihydrofolate (DHF) as a by-product. This enzymatic reaction provides an intracellular de novo source of dTMP, an essential precursor for DNA biosynthesis. In Pectobacterium atrosepticum (strain SCRI 1043 / ATCC BAA-672) (Erwinia carotovora subsp. atroseptica), this protein is Thymidylate synthase.